The following is a 548-amino-acid chain: Solute carrier family 22 member 7 (548 aa).

The helical transmembrane segment at 21–41 (VALLALPRVLLPLHFLLPIFL) threads the bilayer. An N-linked (GlcNAc...) asparagine glycan is attached at asparagine 91. 11 helical membrane passes run 146 to 166 (AAST…GYLS), 180 to 200 (VSTL…MFAI), 204 to 224 (LTGS…LEWL), 234 to 254 (VLSS…GYLI), 259 to 279 (WLLL…WWVP), 346 to 366 (ISLC…GLSL), 376 to 397 (YQTQ…YLSV), 404 to 423 (LTQA…RLLV), 432 to 452 (TVLA…AYLF), 466 to 486 (MGLT…AALL), and 493 to 513 (LPKL…LLLP). Residue phenylalanine 441 is the Important for glutamate counteranion efflux of the active site. The segment at 522-548 (ETIQDVERKSAPTSLQEEEMPMKQVQN) is disordered.

It belongs to the major facilitator (TC 2.A.1) superfamily. Organic cation transporter (TC 2.A.1.19) family. Mainly expressed in liver and kidney. In kidney, expressed in proximal tubular cells. Also expressed in pancreas, small intestine, spinal cord, lung, brain and heart. Expressed in fetal liver.

The protein resides in the basolateral cell membrane. The protein localises to the apical cell membrane. It localises to the cell membrane. Its subcellular location is the cytoplasm. It is found in the cytosol. The catalysed reaction is orotate(out) + L-glutamate(in) = orotate(in) + L-glutamate(out). The enzyme catalyses 3',5'-cyclic GMP(in) = 3',5'-cyclic GMP(out). It catalyses the reaction GMP(in) = GMP(out). It carries out the reaction 2'-deoxyguanosine(in) = 2'-deoxyguanosine(out). The catalysed reaction is GDP(in) = GDP(out). The enzyme catalyses guanosine(in) = guanosine(out). It catalyses the reaction GTP(in) = GTP(out). It carries out the reaction 3',5'-cyclic AMP(in) = 3',5'-cyclic AMP(out). The catalysed reaction is creatinine(in) = creatinine(out). The enzyme catalyses prostaglandin E2(out) = prostaglandin E2(in). It catalyses the reaction 2-oxoglutarate(in) = 2-oxoglutarate(out). It carries out the reaction glutarate(in) = glutarate(out). The catalysed reaction is urate(out) = urate(in). The enzyme catalyses estrone 3-sulfate(out) = estrone 3-sulfate(in). It catalyses the reaction prostaglandin F2alpha(out) = prostaglandin F2alpha(in). In terms of biological role, functions as a Na(+)-independent bidirectional multispecific transporter. Contributes to the renal and hepatic elimination of endogenous organic compounds from the systemic circulation into the urine and bile, respectively. Capable of transporting a wide range of purine and pyrimidine nucleobases, nucleosides and nucleotides, with cGMP, 2'deoxyguanosine and GMP being the preferred substrates. Functions as a pH- and chloride-independent cGMP bidirectional facilitative transporter that can regulate both intracellular and extracellular levels of cGMP and may be involved in cGMP signaling pathways. Mediates orotate/glutamate bidirectional exchange and most likely display a physiological role in hepatic release of glutamate into the blood. Involved in renal secretion and possible reabsorption of creatinine. Able to uptake prostaglandin E2 (PGE2) and may contribute to PGE2 renal excretion. Also transports alpha-ketoglutarate and urate. Apart from the orotate/glutamate exchange, the counterions for the uptake of other SLC22A7/OAT2 substrates remain to be identified. Non functional transporter. Functionally, involved in the uptake of prostaglandin F2-alpha (PGF2-alpha). This Homo sapiens (Human) protein is Solute carrier family 22 member 7.